Here is a 358-residue protein sequence, read N- to C-terminus: MKALARFGKAFGGYKMIDVPQPMCGPEDVVIEIKAAAICGADMKHYNVDSGSDEFNSIRGHEFAGCIAQVGEKVKDWKVGQRVVSDNSGHVCGVCPACEQGDFLCCTEKVNLGLDNNTWGGGFSKYCLVPGEILKIHRHALWEIPDGVDYEDAAVLDPICNAYKSIAQQSKFLPGQDVVVIGTGPLGLFSVQMARIMGAVNIVVVGLQEDVAVRFPVAKELGATAVVNGSTEDVVARCQQICGKDNLGLVIECSGANIALKQAIEMLRPNGEVVRVGMGFKPLDFSINDITAWNKSIIGHMAYDSTSWRNAIRLLASGAIKVKPMITHRIGLSQWREGFDAMVDKTAIKVIMTYDFDE.

Zn(2+)-binding residues include Cys39, His61, Cys92, Cys95, Cys98, Cys106, and Asp157.

Belongs to the zinc-containing alcohol dehydrogenase family. The cofactor is Zn(2+).

This is an uncharacterized protein from Escherichia coli (strain K12).